The chain runs to 324 residues: HSF-like protein (324 aa).

An N-terminal signal peptide occupies residues 1-19 (MNSLVALVLLGQIIGSTVS). 2 Cystatin fetuin-A-type domains span residues 21-130 (QLGP…VKCS) and 141-254 (RDCP…SDCV). 6 disulfides stabilise this stretch: cysteine 28–cysteine 315, cysteine 85–cysteine 96, cysteine 110–cysteine 129, cysteine 143–cysteine 146, cysteine 205–cysteine 217, and cysteine 230–cysteine 253. N-linked (GlcNAc...) asparagine glycosylation is present at asparagine 95. N-linked (GlcNAc...) asparagine glycosylation is present at asparagine 204. N-linked (GlcNAc...) asparagine glycosylation is present at asparagine 282.

The protein belongs to the fetuin family. As to quaternary structure, homodimer. As to expression, expressed by the liver.

Its subcellular location is the secreted. Functionally, may not have antihemorrhagic activity. In Protobothrops flavoviridis (Habu), this protein is HSF-like protein.